The primary structure comprises 677 residues: Methionine--tRNA ligase (677 aa).

A 'HIGH' region motif is present at residues 15 to 25; it reads PYANGSIHLGH. Zn(2+) is bound by residues Cys146, Cys149, Cys159, and Cys162. The 'KMSKS' region signature appears at 333 to 337; it reads KMSKS. Lys336 provides a ligand contact to ATP. The region spanning 575-677 is the tRNA-binding domain; that stretch reads DFAKVDLRVA…AGAKPGHQVK (103 aa).

It belongs to the class-I aminoacyl-tRNA synthetase family. MetG type 1 subfamily. As to quaternary structure, homodimer. Zn(2+) is required as a cofactor.

The protein resides in the cytoplasm. The catalysed reaction is tRNA(Met) + L-methionine + ATP = L-methionyl-tRNA(Met) + AMP + diphosphate. Functionally, is required not only for elongation of protein synthesis but also for the initiation of all mRNA translation through initiator tRNA(fMet) aminoacylation. In Escherichia coli O127:H6 (strain E2348/69 / EPEC), this protein is Methionine--tRNA ligase.